The primary structure comprises 310 residues: Protease HtpX homolog (310 aa).

The next 2 membrane-spanning stretches (helical) occupy residues 7–27 and 29–49; these read SVMLLTAMTAFLLIVGQLIGG and AGMTFALIMAVGMNFFSYWYS. Residue histidine 131 coordinates Zn(2+). Glutamate 132 is an active-site residue. Histidine 135 provides a ligand contact to Zn(2+). Transmembrane regions (helical) follow at residues 141–161 and 178–198; these read ILIGTIAATMAGAVMFLASMA and PLGFAGMLIMAILAPIGAALI. Glutamate 207 lines the Zn(2+) pocket. Residues 277-310 form a disordered region; sequence LTGARPQSGGAPSGPERTARNAEDSAKDFWDSLK. The segment covering 293–310 has biased composition (basic and acidic residues); that stretch reads RTARNAEDSAKDFWDSLK.

Belongs to the peptidase M48B family. Requires Zn(2+) as cofactor.

The protein resides in the cell inner membrane. The protein is Protease HtpX homolog of Desulfatibacillum aliphaticivorans.